The sequence spans 88 residues: Sec-independent protein translocase protein TatA (88 aa).

The helical transmembrane segment at 1–21 (MGSLSPWHWVVLVVVVVLLFG) threads the bilayer. Residues 49–71 (ENQAQASALETPMQNPTVVQSQR) show a composition bias toward polar residues. The tract at residues 49-88 (ENQAQASALETPMQNPTVVQSQRVVPPWSTEQDHTEARPA) is disordered. Positions 79–88 (EQDHTEARPA) are enriched in basic and acidic residues.

The protein belongs to the TatA/E family. In terms of assembly, the Tat system comprises two distinct complexes: a TatABC complex, containing multiple copies of TatA, TatB and TatC subunits, and a separate TatA complex, containing only TatA subunits. Substrates initially bind to the TatABC complex, which probably triggers association of the separate TatA complex to form the active translocon.

The protein resides in the cell membrane. Functionally, part of the twin-arginine translocation (Tat) system that transports large folded proteins containing a characteristic twin-arginine motif in their signal peptide across membranes. TatA could form the protein-conducting channel of the Tat system. The sequence is that of Sec-independent protein translocase protein TatA from Mycobacterium leprae (strain TN).